We begin with the raw amino-acid sequence, 37 residues long: Large ribosomal subunit protein bL36 (37 aa).

Belongs to the bacterial ribosomal protein bL36 family.

This chain is Large ribosomal subunit protein bL36, found in Sulfurimonas denitrificans (strain ATCC 33889 / DSM 1251) (Thiomicrospira denitrificans (strain ATCC 33889 / DSM 1251)).